The following is a 161-amino-acid chain: Pupal cuticle protein C1B (161 aa).

9 consecutive repeat copies span residues 6-9 (AAPA), 14-17 (AAPA), 35-38 (AAPA), 87-90 (AAPV), 103-106 (AAPV), 112-115 (AAPV), 121-124 (AAPV), 130-133 (AAPV), and 143-146 (AAPA).

Component of the cuticle of the pupa of Tenebrio molitor. The polypeptide is Pupal cuticle protein C1B (Tenebrio molitor (Yellow mealworm beetle)).